A 175-amino-acid chain; its full sequence is Hypoxanthine-guanine phosphoribosyltransferase (175 aa).

Diphosphate is bound by residues Lys-40 and Gly-41. Mg(2+) is bound by residues Glu-96 and Asp-97. The Proton acceptor role is filled by Asp-100. GMP is bound by residues Lys-128, 149 to 150 (FL), and Asp-156. Arg-162 contacts diphosphate.

It belongs to the purine/pyrimidine phosphoribosyltransferase family. Mg(2+) serves as cofactor.

The protein resides in the cytoplasm. The catalysed reaction is IMP + diphosphate = hypoxanthine + 5-phospho-alpha-D-ribose 1-diphosphate. It carries out the reaction GMP + diphosphate = guanine + 5-phospho-alpha-D-ribose 1-diphosphate. Its pathway is purine metabolism; IMP biosynthesis via salvage pathway; IMP from hypoxanthine: step 1/1. It functions in the pathway purine metabolism; GMP biosynthesis via salvage pathway; GMP from guanine: step 1/1. Functionally, purine salvage pathway enzyme that catalyzes the transfer of the ribosyl-5-phosphate group from 5-phospho-alpha-D-ribose 1-diphosphate (PRPP) to the N9 position of the 6-oxopurines hypoxanthine and guanine to form the corresponding ribonucleotides IMP (inosine 5'-monophosphate) and GMP (guanosine 5'-monophosphate), with the release of PPi. The polypeptide is Hypoxanthine-guanine phosphoribosyltransferase (hpt) (Mycoplasma genitalium (strain ATCC 33530 / DSM 19775 / NCTC 10195 / G37) (Mycoplasmoides genitalium)).